A 262-amino-acid chain; its full sequence is 3-deoxy-manno-octulosonate cytidylyltransferase (262 aa).

The protein belongs to the KdsB family.

It localises to the cytoplasm. The enzyme catalyses 3-deoxy-alpha-D-manno-oct-2-ulosonate + CTP = CMP-3-deoxy-beta-D-manno-octulosonate + diphosphate. Its pathway is nucleotide-sugar biosynthesis; CMP-3-deoxy-D-manno-octulosonate biosynthesis; CMP-3-deoxy-D-manno-octulosonate from 3-deoxy-D-manno-octulosonate and CTP: step 1/1. The protein operates within bacterial outer membrane biogenesis; lipopolysaccharide biosynthesis. Functionally, activates KDO (a required 8-carbon sugar) for incorporation into bacterial lipopolysaccharide in Gram-negative bacteria. In Koribacter versatilis (strain Ellin345), this protein is 3-deoxy-manno-octulosonate cytidylyltransferase.